The following is a 62-amino-acid chain: Probable tautomerase SH1546 (62 aa).

P2 serves as the catalytic Proton acceptor; via imino nitrogen.

It belongs to the 4-oxalocrotonate tautomerase family.

The chain is Probable tautomerase SH1546 from Staphylococcus haemolyticus (strain JCSC1435).